The following is a 680-amino-acid chain: 1-deoxy-D-xylulose-5-phosphate synthase (680 aa).

Residues histidine 113 and 154 to 156 (GHS) each bind thiamine diphosphate. Aspartate 185 is a binding site for Mg(2+). Thiamine diphosphate is bound by residues 186 to 187 (GA), asparagine 214, phenylalanine 323, and glutamate 408. A Mg(2+)-binding site is contributed by asparagine 214.

This sequence belongs to the transketolase family. DXPS subfamily. Homodimer. Mg(2+) is required as a cofactor. Thiamine diphosphate serves as cofactor.

The enzyme catalyses D-glyceraldehyde 3-phosphate + pyruvate + H(+) = 1-deoxy-D-xylulose 5-phosphate + CO2. It functions in the pathway metabolic intermediate biosynthesis; 1-deoxy-D-xylulose 5-phosphate biosynthesis; 1-deoxy-D-xylulose 5-phosphate from D-glyceraldehyde 3-phosphate and pyruvate: step 1/1. Functionally, catalyzes the acyloin condensation reaction between C atoms 2 and 3 of pyruvate and glyceraldehyde 3-phosphate to yield 1-deoxy-D-xylulose-5-phosphate (DXP). The polypeptide is 1-deoxy-D-xylulose-5-phosphate synthase (Psychrobacter arcticus (strain DSM 17307 / VKM B-2377 / 273-4)).